Consider the following 624-residue polypeptide: Steryl-sulfatase (624 aa).

An N-terminal signal peptide occupies residues 1 to 22 (MPRPRPLLLAVMAATLADIILA). Residues 24 to 192 (DPAPAGPAPR…GTVFGPALRV (169 aa)) lie on the Lumenal side of the membrane. Ca(2+) is bound by residues Asp43 and Asp44. N-linked (GlcNAc...) asparagine glycosylation is present at Asn55. Cys83 contacts Ca(2+). Cys83 serves as the catalytic Nucleophile. Cys83 carries the post-translational modification 3-oxoalanine (Cys). The active site involves His144. Disulfide bonds link Cys149–Cys156 and Cys178–Cys250. The helical transmembrane segment at 193-216 (FAAGPLAALGASLAAMAAARWAGL) threads the bilayer. Over 217–220 (ARVP) the chain is Cytoplasmic. A helical membrane pass occupies residues 221 to 242 (GWALAGTAAAMLAVGGPRSASC). Residues 243-624 (LGFRPANCFL…ATTRTQATPR (382 aa)) are Lumenal-facing. Residues Asp350 and His351 each contribute to the Ca(2+) site. 2 disulfides stabilise this stretch: Cys454–Cys495 and Cys487–Cys493. A glycan (N-linked (GlcNAc...) asparagine) is linked at Asn465. The disordered stretch occupies residues 572-624 (GGAGGGAGAQDDSGHAHGDGSHAHDDPGHAQDRGDDDAHYGGHATTRTQATPR). The span at 583–611 (DSGHAHGDGSHAHDDPGHAQDRGDDDAHY) shows a compositional bias: basic and acidic residues.

It belongs to the sulfatase family. In terms of assembly, homodimer. The cofactor is Ca(2+). In terms of processing, the conversion to 3-oxoalanine (also known as C-formylglycine, FGly), of a serine or cysteine residue in prokaryotes and of a cysteine residue in eukaryotes, is critical for catalytic activity.

The protein resides in the microsome membrane. It is found in the endoplasmic reticulum membrane. It carries out the reaction dehydroepiandrosterone 3-sulfate + H2O = 3beta-hydroxyandrost-5-en-17-one + sulfate + H(+). It catalyses the reaction estrone 3-sulfate + H2O = estrone + sulfate + H(+). Its function is as follows. Catalyzes the conversion of sulfated steroid precursors, such as dehydroepiandrosterone sulfate (DHEA-S) and estrone sulfate to the free steroid. In Mus musculus (Mouse), this protein is Steryl-sulfatase (Sts).